Here is a 922-residue protein sequence, read N- to C-terminus: ATP-dependent helicase fft3 (922 aa).

Disordered regions lie at residues glutamate 139–arginine 177 and proline 198–asparagine 224. The segment covering aspartate 153 to serine 166 has biased composition (low complexity). Positions proline 207–serine 223 are enriched in acidic residues. Phosphoserine occurs at positions 213 and 219. The 169-residue stretch at tyrosine 399 to histidine 567 folds into the Helicase ATP-binding domain. Aspartate 412 to threonine 419 serves as a coordination point for ATP. The DEGH box signature appears at aspartate 518–histidine 521. At serine 617 the chain carries Phosphoserine. Positions lysine 765–aspartate 922 constitute a Helicase C-terminal domain.

The protein belongs to the SNF2/RAD54 helicase family. In terms of assembly, interacts with the GDP-bound form of spi1.

Its subcellular location is the nucleus. The protein resides in the chromosome. It carries out the reaction ATP + H2O = ADP + phosphate + H(+). DNA helicase that possesses intrinsic ATP-dependent nucleosome-remodeling activity and is required for heterochromatin organization. Required for maintaining a heterochromatin chromatin structure at centromeres and subtelomeres by protecting these regions from euchromatin assembly. Enhances the nucleotide exchange activity of the pim1 guanine nucleotide exchange factor and abolishes histone-H3-mediated RanGAP inhibition. Involved in the construction of the centromeres. This is ATP-dependent helicase fft3 (fft3) from Schizosaccharomyces pombe (strain 972 / ATCC 24843) (Fission yeast).